Reading from the N-terminus, the 721-residue chain is Protein mu-NS (721 aa).

Residues 1–13 (MASFKGFSANTVP) are interaction with sigma-NS. The segment at 1–38 (MASFKGFSANTVPVSKTRKDTSSLTATPGLRAPSMSSP) is RNA-binding. The interval 14-40 (VSKTRKDTSSLTATPGLRAPSMSSPVD) is interaction with mu-2. The interval 17 to 37 (TRKDTSSLTATPGLRAPSMSS) is disordered. Positions 471–721 (QSDTVDGIKL…IDFSVPADEL (251 aa)) are involved in the formation of factory-like inclusions. Coiled coils occupy residues 523–556 (LLSQ…ADVK) and 632–686 (KQAH…NQRQ).

Belongs to the orthoreovirus mu-NS protein family. Interacts with mu-2. Interacts with sigma-NS; in viral factories. Interacts with the inner capsid proteins lambda-1 and sigma-2, and outer capsid protein lambda-2; in viral factories. Post-translationally, the N-terminus is blocked.

The protein resides in the host cytoplasm. Non-structural protein implicated with protein sigma-NS in forming the matrix of viral factories, which are large inclusions in the host cytoplasm where replication intermediates are assembled and viral RNA replication takes place. Together with mu-2, recruits the other core proteins to these factories. The sequence is that of Protein mu-NS (M3) from Mammalia (T2J).